The following is a 94-amino-acid chain: UPF0358 protein Bcer98_2651 (94 aa).

It belongs to the UPF0358 family.

The protein is UPF0358 protein Bcer98_2651 of Bacillus cytotoxicus (strain DSM 22905 / CIP 110041 / 391-98 / NVH 391-98).